The sequence spans 156 residues: Endoribonuclease YbeY (156 aa).

Residues H122, H126, and H132 each coordinate Zn(2+).

Belongs to the endoribonuclease YbeY family. Zn(2+) is required as a cofactor.

The protein resides in the cytoplasm. Its function is as follows. Single strand-specific metallo-endoribonuclease involved in late-stage 70S ribosome quality control and in maturation of the 3' terminus of the 16S rRNA. This Bacillus cereus (strain ATCC 14579 / DSM 31 / CCUG 7414 / JCM 2152 / NBRC 15305 / NCIMB 9373 / NCTC 2599 / NRRL B-3711) protein is Endoribonuclease YbeY.